The chain runs to 498 residues: MEPMLPEAGEAALLSSYAPQASGSMGVDPDPITGLVSTSAAPLVRVEEAPKFELESYIANYTGRTRFNRLYLIGTCSSYLAVDALKAAIAEAKSGKDVARYLRAVQALADVAPNEPEATIDSDWVERSQKVVKAETDRLEHELRGYKNNLIKESIRMGNEELGQHYHRIGDLTSAFKAYSRMRDFCTTPSHIASMLFKIINVAIERGDWLNVQSNVHRLRSQGGKPEEQAKHQPKISAAMGLSQLHSGSYLEAANSFIATDPSLGDTFNEVLTSNDVAVYGGLCALASMDRNELQRRVLDNSSFRNFLELEPHIRRAISFFCNSKFRPCLEILEAYRADYLLDIHLQRHVQVLYNRIRTKSIQQYLIPFNRVSLESMAKIFVLGNPTSQSSQSDSKSAFVQELISLIQDGTLDARIDLEKHVLVSTQGDKRIEVQEAVLDSLDNYVREAHLRLLRSNIIRAGLEVRPLGEDRRTKLEERGKKGHSAIGNLLRATGMKQ.

Residues 249–430 (SYLEAANSFI…HVLVSTQGDK (182 aa)) enclose the PCI domain.

This sequence belongs to the CSN1 family. As to quaternary structure, component of the COP9 signalosome (CSN) complex.

Its subcellular location is the cytoplasm. The protein localises to the nucleus. Functionally, component of the COP9 signalosome (CSN) complex that acts as an regulator of the ubiquitin (Ubl) conjugation pathway by mediating the deneddylation of the cullin subunit of SCF-type E3 ubiquitin-protein ligase complexes. The CSN complex seems to link protein degradation to sexual development. Required for fruit body formation. This Emericella nidulans (strain FGSC A4 / ATCC 38163 / CBS 112.46 / NRRL 194 / M139) (Aspergillus nidulans) protein is COP9 signalosome complex subunit 1 (csnA).